The primary structure comprises 233 residues: AA9 family lytic polysaccharide monooxygenase A (233 aa).

A signal peptide spans 1–17; it reads MKLTTSVALLAAAGAQA. Residues histidine 18 and histidine 90 each contribute to the Cu(2+) site. Intrachain disulfides connect cysteine 59–cysteine 180 and cysteine 150–cysteine 233. Residue asparagine 132 is glycosylated (N-linked (GlcNAc...) asparagine). Residues histidine 166 and glutamine 175 each contribute to the O2 site. A Cu(2+)-binding site is contributed by tyrosine 177.

Belongs to the polysaccharide monooxygenase AA9 family. Cu(2+) is required as a cofactor.

It is found in the secreted. It catalyses the reaction [(1-&gt;4)-beta-D-glucosyl]n+m + reduced acceptor + O2 = 4-dehydro-beta-D-glucosyl-[(1-&gt;4)-beta-D-glucosyl]n-1 + [(1-&gt;4)-beta-D-glucosyl]m + acceptor + H2O.. Its function is as follows. Lytic polysaccharide monooxygenase (LPMO) that depolymerizes crystalline and amorphous polysaccharides via the oxidation of scissile alpha- or beta-(1-4)-glycosidic bonds, yielding C1 and C4 oxidation products. Catalysis by LPMOs requires the reduction of the active-site copper from Cu(II) to Cu(I) by a reducing agent and H(2)O(2) or O(2) as a cosubstrate. Shows endoglucanase activity on tamarind xyloglucan, as well as on beechwood xylan when combined with phosphoric acid swollen cellulose (PASC). Shows no activity on wheat arabinoxylan, konjac glucomannan, acetylated spruce galactoglucomannan, or cellopentaose. The chain is AA9 family lytic polysaccharide monooxygenase A from Thermothielavioides terrestris (strain ATCC 38088 / NRRL 8126) (Thielavia terrestris).